The sequence spans 378 residues: Glutamate 5-kinase (378 aa).

Lys20 is an ATP binding site. The substrate site is built by Ser60, Asp147, and Asn159. ATP is bound by residues 179-180 and 221-227; these read TD and TGGMLTK. One can recognise a PUA domain in the interval 286–364; the sequence is RGRVVLDDGA…SQIARILGSM (79 aa).

The protein belongs to the glutamate 5-kinase family.

It localises to the cytoplasm. It carries out the reaction L-glutamate + ATP = L-glutamyl 5-phosphate + ADP. It participates in amino-acid biosynthesis; L-proline biosynthesis; L-glutamate 5-semialdehyde from L-glutamate: step 1/2. Functionally, catalyzes the transfer of a phosphate group to glutamate to form L-glutamate 5-phosphate. This chain is Glutamate 5-kinase, found in Bordetella parapertussis (strain 12822 / ATCC BAA-587 / NCTC 13253).